A 1238-amino-acid chain; its full sequence is Multifunctional 2-oxoglutarate metabolism enzyme (1238 aa).

The segment at 1–41 (MANISSPFGQNEWLVEEMYRKFRDDPSSVDPSWHEFLVDYN) is 2-oxoglutarate dehydrogenase E1, N-terminal part. The linker stretch occupies residues 42–97 (PESTAEPVLTDPTSTDKQPSATPQAKPAAAADPVASRAKPATTPTVANGTAAGSAA). The interval 44–108 (STAEPVLTDP…PAKTTTTPPI (65 aa)) is disordered. The segment covering 59 to 107 (QPSATPQAKPAAAADPVASRAKPATTPTVANGTAAGSAAAPAKTTTTPP) has biased composition (low complexity). The interval 98-346 (APAKTTTTPP…LRTIHEMVLS (249 aa)) is succinyltransferase E2. The active-site Proton acceptor; for succinyltransferase activity is H325. The tract at residues 347–1238 (DSFWDEIFRE…QQEILDTAFG (892 aa)) is 2-oxoglutarate dehydrogenase E1, C-terminal part. Residue R551 participates in thiamine diphosphate binding. Positions 590 and 615 each coordinate 2-oxoglutarate. Thiamine diphosphate contacts are provided by S615, L617, D657, A658, A659, and N690. Position 657 (D657) interacts with Mg(2+). Residues N690 and I692 each contribute to the Mg(2+) site. Residues 795–825 (DISLKEAEDALRDYQGQLERVFNEVRDLEKH) adopt a coiled-coil conformation. H1032 is a 2-oxoglutarate binding site. 7 residues coordinate acetyl-CoA: T1050, R1066, K1101, S1104, Q1154, R1161, and R1162.

It belongs to the 2-oxoacid dehydrogenase family. Kgd subfamily. In terms of assembly, homodimer. The 2-oxoglutarate dehydrogenase (ODH) complex contains multiple copies of three enzymatic components: 2-oxoglutarate dehydrogenase (E1), dihydrolipoamide succinyltransferase (E2) and lipoamide dehydrogenase (E3). Mg(2+) is required as a cofactor. The cofactor is thiamine diphosphate.

It carries out the reaction glyoxylate + 2-oxoglutarate + H(+) = 2-hydroxy-3-oxoadipate + CO2. The enzyme catalyses 2-oxoglutarate + H(+) = succinate semialdehyde + CO2. It catalyses the reaction N(6)-[(R)-lipoyl]-L-lysyl-[protein] + 2-oxoglutarate + H(+) = N(6)-[(R)-S(8)-succinyldihydrolipoyl]-L-lysyl-[protein] + CO2. The catalysed reaction is N(6)-[(R)-dihydrolipoyl]-L-lysyl-[protein] + succinyl-CoA = N(6)-[(R)-S(8)-succinyldihydrolipoyl]-L-lysyl-[protein] + CoA. The protein operates within carbohydrate metabolism; tricarboxylic acid cycle; succinate from 2-oxoglutarate (transferase route): step 1/2. Its pathway is carbohydrate metabolism; tricarboxylic acid cycle; succinyl-CoA from 2-oxoglutarate (dehydrogenase route): step 1/1. With respect to regulation, alpha-ketoglutarate dehydrogenase and decarboxylase activities are inhibited by unphosphorylated GarA, and allosterically activated by acetyl-CoA, the main substrate of the TCA cycle. In terms of biological role, shows three enzymatic activities that share a first common step, the attack of thiamine-PP on 2-oxoglutarate (alpha-ketoglutarate, KG), leading to the formation of an enamine-thiamine-PP intermediate upon decarboxylation. Thus, displays KGD activity, catalyzing the decarboxylation from five-carbon 2-oxoglutarate to four-carbon succinate semialdehyde (SSA). Also catalyzes C-C bond formation between the activated aldehyde formed after decarboxylation of alpha-ketoglutarate and the carbonyl of glyoxylate (GLX), to yield 2-hydroxy-3-oxoadipate (HOA), which spontaneously decarboxylates to form 5-hydroxylevulinate (HLA). And is also a component of the 2-oxoglutarate dehydrogenase (ODH) complex, that catalyzes the overall conversion of 2-oxoglutarate to succinyl-CoA and CO(2). The KG decarboxylase and KG dehydrogenase reactions provide two alternative, tightly regulated, pathways connecting the oxidative and reductive branches of the TCA cycle. The protein is Multifunctional 2-oxoglutarate metabolism enzyme (kgd) of Mycobacterium leprae (strain TN).